The sequence spans 455 residues: MLTDIVILAAGQGTRMHSALPKVLQPLGGKPMLAHVLATATDLAVRRIHIVVGFGGDAVQAAFPDTQASWWIQAQQLGTGDALKSALPGLTGADRVLVLYGDVPLLTAATLREFLQQTPVTALGLTTASVSEPHGYGRILRDADGQVQGIREHKDCQTDEQAICEINLGMMVLPVQPLAGWLQGLSARNAQGEIYLTDVVAAARADGYVVWPFTLADATEALGVNDPVQLAILERVFQRQQLRALQMQGLRVADPARVDIRGELTCGQDCWVDPNVLFVGEVHLGHRVRVGAGAVLQDARIGDDVEILPYSHIEGAQIGAGARIGPFARIRPGTEIGEAAHIGNYVEVKAAKIGAGSKANHLSYLGDAEIGTGVNVGAGTITCNYDGANKHRTIIGNDVFIGSDSQLVAPVNIGDGATIGAGSTITKEVPPGGLTLSRSPQRTIPHWQRPRRDKK.

The interval 1 to 227 (MLTDIVILAA…ATEALGVNDP (227 aa)) is pyrophosphorylase. UDP-N-acetyl-alpha-D-glucosamine-binding positions include 8 to 11 (LAAG), Lys-22, Gln-73, 78 to 79 (GT), 100 to 102 (YGD), Gly-137, Glu-152, Asn-167, and Asn-225. Residue Asp-102 participates in Mg(2+) binding. Position 225 (Asn-225) interacts with Mg(2+). Positions 228–248 (VQLAILERVFQRQQLRALQMQ) are linker. Residues 249 to 455 (GLRVADPARV…HWQRPRRDKK (207 aa)) are N-acetyltransferase. Residues Arg-331 and Lys-349 each contribute to the UDP-N-acetyl-alpha-D-glucosamine site. The active-site Proton acceptor is the His-361. The UDP-N-acetyl-alpha-D-glucosamine site is built by Tyr-364 and Asn-375. Residues Ala-378, 384 to 385 (NY), Ser-403, Ala-421, and Arg-438 contribute to the acetyl-CoA site. The tract at residues 420–455 (GAGSTITKEVPPGGLTLSRSPQRTIPHWQRPRRDKK) is disordered.

It in the N-terminal section; belongs to the N-acetylglucosamine-1-phosphate uridyltransferase family. In the C-terminal section; belongs to the transferase hexapeptide repeat family. As to quaternary structure, homotrimer. It depends on Mg(2+) as a cofactor.

Its subcellular location is the cytoplasm. It catalyses the reaction alpha-D-glucosamine 1-phosphate + acetyl-CoA = N-acetyl-alpha-D-glucosamine 1-phosphate + CoA + H(+). The catalysed reaction is N-acetyl-alpha-D-glucosamine 1-phosphate + UTP + H(+) = UDP-N-acetyl-alpha-D-glucosamine + diphosphate. The protein operates within nucleotide-sugar biosynthesis; UDP-N-acetyl-alpha-D-glucosamine biosynthesis; N-acetyl-alpha-D-glucosamine 1-phosphate from alpha-D-glucosamine 6-phosphate (route II): step 2/2. It functions in the pathway nucleotide-sugar biosynthesis; UDP-N-acetyl-alpha-D-glucosamine biosynthesis; UDP-N-acetyl-alpha-D-glucosamine from N-acetyl-alpha-D-glucosamine 1-phosphate: step 1/1. It participates in bacterial outer membrane biogenesis; LPS lipid A biosynthesis. In terms of biological role, catalyzes the last two sequential reactions in the de novo biosynthetic pathway for UDP-N-acetylglucosamine (UDP-GlcNAc). The C-terminal domain catalyzes the transfer of acetyl group from acetyl coenzyme A to glucosamine-1-phosphate (GlcN-1-P) to produce N-acetylglucosamine-1-phosphate (GlcNAc-1-P), which is converted into UDP-GlcNAc by the transfer of uridine 5-monophosphate (from uridine 5-triphosphate), a reaction catalyzed by the N-terminal domain. The polypeptide is Bifunctional protein GlmU (Acidithiobacillus ferrooxidans (strain ATCC 23270 / DSM 14882 / CIP 104768 / NCIMB 8455) (Ferrobacillus ferrooxidans (strain ATCC 23270))).